We begin with the raw amino-acid sequence, 87 residues long: Small ribosomal subunit protein bS20 (87 aa).

The tract at residues 1-29 (MANTAQARKRARQAVKQNAHNSSQRSTLR) is disordered. Residues 20 to 29 (HNSSQRSTLR) show a composition bias toward polar residues.

The protein belongs to the bacterial ribosomal protein bS20 family.

Binds directly to 16S ribosomal RNA. This Herminiimonas arsenicoxydans protein is Small ribosomal subunit protein bS20.